We begin with the raw amino-acid sequence, 487 residues long: Histamine H1 receptor (487 aa).

At 1–29 the chain is on the extracellular side; sequence MSLPNSSCLLEDKMCEGNKTTMASPQLMP. N5 and N18 each carry an N-linked (GlcNAc...) asparagine glycan. The chain crosses the membrane as a helical span at residues 30 to 50; that stretch reads LVVVLSTICLVTVGLNLLVLY. Topologically, residues 51-64 are cytoplasmic; it reads AVRSERKLHTVGNL. A helical membrane pass occupies residues 65-89; it reads YIVSLSVADLIVGAVVMPMNILYLL. Residues 90 to 97 are Extracellular-facing; that stretch reads MSKWSLGR. The chain crosses the membrane as a helical span at residues 98–123; the sequence is PLCLFWLSMDYVASTASIFSVFILCI. C100 and C180 are joined by a disulfide. The histamine site is built by D107 and T112. Residues 107–112 are important for agonist binding; the sequence is DYVAST. The Cytoplasmic segment spans residues 124-144; it reads DRYRSVQQPLRYLKYRTKTRA. Phosphothreonine is present on residues T140 and T142. The helical transmembrane segment at 145 to 164 threads the bilayer; sequence SATILGAWFLSFLWVIPILG. Residues 165-188 lie on the Extracellular side of the membrane; that stretch reads WNHFMQQTSVRREDKCETDFYDVT. The helical transmembrane segment at 189-211 threads the bilayer; that stretch reads WFKVMTAIINFYLPTLLMLWFYA. N198 is a histamine binding site. Over 212-416 the chain is Cytoplasmic; that stretch reads KIYKAVRQHC…MNRERKAAKQ (205 aa). The residue at position 230 (S230) is a Phosphoserine. Residues 238–261 are compositionally biased toward basic and acidic residues; that stretch reads KLRPENPKGDAKKPGKESPWEVLK. Residues 238 to 292 form a disordered region; the sequence is KLRPENPKGDAKKPGKESPWEVLKRKPKDAGGGSVLKSPSQTXKEMKSPVVFSQE. T279 carries the phosphothreonine modification. A phosphoserine mark is found at S344 and S347. A disordered region spans residues 345-379; it reads EISEDQMLGDSQSFSRTDSDTTTETAPGKGKLRSG. Positions 353 to 369 are enriched in polar residues; that stretch reads GDSQSFSRTDSDTTTET. 3 positions are modified to phosphoserine: S380, S396, and S398. A helical membrane pass occupies residues 417 to 440; the sequence is LGFIMAAFILCWIPYFIFFMVIAF. Positions 424–428 are important for agonist binding; sequence FILCW. Y431 provides a ligand contact to histamine. C441 and C444 are joined by a disulfide. Over 441–446 the chain is Extracellular; sequence CKNCCN. Residues 447 to 469 form a helical membrane-spanning segment; the sequence is EHLHMFTIWLGYINSTLNPLIYP. The Cytoplasmic segment spans residues 470–487; sequence LCNENFKKTFKRILHIRS.

Belongs to the G-protein coupled receptor 1 family. Phosphorylation at sites in the second and third cytoplasmic loops independently contribute to agonist-induced receptor down-regulation.

The protein localises to the cell membrane. Functionally, G-protein-coupled receptor for histamine, a biogenic amine that functions as an immune modulator and a neurotransmitter. Through the H1 receptor, histamine mediates the contraction of smooth muscles and increases capillary permeability due to contraction of terminal venules. Also mediates neurotransmission in the central nervous system and thereby regulates circadian rhythms, emotional and locomotor activities as well as cognitive functions. The protein is Histamine H1 receptor of Pan troglodytes (Chimpanzee).